The primary structure comprises 88 residues: DASH complex subunit HSK3 (88 aa).

The span at 1–15 (MSSRGSGANAASRQS) shows a compositional bias: low complexity. The tract at residues 1–24 (MSSRGSGANAASRQSMTASGGAVK) is disordered.

Belongs to the DASH complex HSK3 family. Component of the DASH complex consisting of ASK1, DAD1, DAD2, DAD3, DAD4, DAM1, DUO1, HSK3, SPC19 and SPC34, with a stoichiometry of one copy of each subunit per complex. Multiple DASH complexes oligomerize to form a ring that encircles spindle microtubules and organizes the rod-like NDC80 complexes of the outer kinetochore. DASH complex oligomerization strengthens microtubule attachments. On cytoplasmic microtubules, DASH complexes appear to form patches instead of rings.

Its subcellular location is the nucleus. It is found in the cytoplasm. The protein localises to the cytoskeleton. It localises to the spindle. The protein resides in the chromosome. Its subcellular location is the centromere. It is found in the kinetochore. Component of the DASH complex that connects microtubules with kinetochores and couples microtubule depolymerisation to chromosome movement; it is involved in retrieving kinetochores to the spindle poles before their re-orientation on the spindle in early mitosis and allows microtubule depolymerization to pull chromosomes apart and resist detachment during anaphase. Kinetochores, consisting of a centromere-associated inner segment and a microtubule-contacting outer segment, play a crucial role in chromosome segregation by mediating the physical connection between centromeric DNA and microtubules. Kinetochores also serve as an input point for the spindle assembly checkpoint, which delays anaphase until all chromosomes have bioriented on the mitotic spindle. The chain is DASH complex subunit HSK3 from Chaetomium thermophilum (strain DSM 1495 / CBS 144.50 / IMI 039719) (Thermochaetoides thermophila).